Reading from the N-terminus, the 379-residue chain is Flap endonuclease 1 (379 aa).

The N-domain stretch occupies residues 1 to 105 (MGVKGLNQLI…GELEKRLLRR (105 aa)). Residue aspartate 34 coordinates Mg(2+). Residues arginine 47 and arginine 71 each contribute to the DNA site. 5 residues coordinate Mg(2+): aspartate 87, glutamate 159, glutamate 161, aspartate 180, and aspartate 182. The segment at 123–254 (DMVRYEKRTV…VTAFKLIKEH (132 aa)) is I-domain. Glutamate 159 contributes to the DNA binding site. DNA is bound by residues glycine 232 and aspartate 234. Aspartate 234 serves as a coordination point for Mg(2+). Positions 341–349 (VQGRLDGFF) are interaction with PCNA. The disordered stretch occupies residues 344-379 (RLDGFFQSVPKPKDSADKKRKNDTKSAKSKKAKTRK). Over residues 361–379 (KKRKNDTKSAKSKKAKTRK) the composition is skewed to basic residues.

The protein belongs to the XPG/RAD2 endonuclease family. FEN1 subfamily. In terms of assembly, interacts with PCNA. Three molecules of FEN1 bind to one PCNA trimer with each molecule binding to one PCNA monomer. PCNA stimulates the nuclease activity without altering cleavage specificity. Mg(2+) is required as a cofactor. Post-translationally, phosphorylated. Phosphorylation upon DNA damage induces relocalization to the nuclear plasma.

The protein localises to the nucleus. It localises to the nucleolus. The protein resides in the nucleoplasm. Its subcellular location is the mitochondrion. In terms of biological role, structure-specific nuclease with 5'-flap endonuclease and 5'-3' exonuclease activities involved in DNA replication and repair. During DNA replication, cleaves the 5'-overhanging flap structure that is generated by displacement synthesis when DNA polymerase encounters the 5'-end of a downstream Okazaki fragment. It enters the flap from the 5'-end and then tracks to cleave the flap base, leaving a nick for ligation. Also involved in the long patch base excision repair (LP-BER) pathway, by cleaving within the apurinic/apyrimidinic (AP) site-terminated flap. Acts as a genome stabilization factor that prevents flaps from equilibrating into structures that lead to duplications and deletions. Also possesses 5'-3' exonuclease activity on nicked or gapped double-stranded DNA, and exhibits RNase H activity. Also involved in replication and repair of rDNA and in repairing mitochondrial DNA. The sequence is that of Flap endonuclease 1 from Debaryomyces hansenii (strain ATCC 36239 / CBS 767 / BCRC 21394 / JCM 1990 / NBRC 0083 / IGC 2968) (Yeast).